The chain runs to 709 residues: Threonine--tRNA ligase, mitochondrial 1 (709 aa).

A mitochondrion-targeting transit peptide spans 1 to 21; sequence MLLRLTARSIRRFTTSSSSLP. One can recognise a TGS domain in the interval 73-135; that stretch reads DPIKVTLPDG…EGDCKLELFK (63 aa). C407, H458, and H584 together coordinate Zn(2+).

The protein belongs to the class-II aminoacyl-tRNA synthetase family.

It localises to the mitochondrion. Its subcellular location is the cytoplasm. The protein resides in the cytosol. The catalysed reaction is tRNA(Thr) + L-threonine + ATP = L-threonyl-tRNA(Thr) + AMP + diphosphate + H(+). This chain is Threonine--tRNA ligase, mitochondrial 1, found in Arabidopsis thaliana (Mouse-ear cress).